Consider the following 862-residue polypeptide: FAS1 domain-containing protein YLR001C (862 aa).

A signal peptide spans 1–23 (MNMAIQTIKYIFWLLPILGLTQA). The Vacuolar segment spans residues 24 to 762 (LLQNPGDDFP…KYHLRLPGIA (739 aa)). Residues 34-162 (FSTVIDILSE…ASLQGINNLL (129 aa)) enclose the FAS1 1 domain. Residues N68, N112, N152, N200, N291, N333, N450, N521, N542, N569, N663, N679, and N688 are each glycosylated (N-linked (GlcNAc...) asparagine). FAS1 domains are found at residues 463–604 (PGDL…DQLD) and 606–744 (PVDL…DKPI). The helical transmembrane segment at 763–783 (VGFGVIIGVTIAISLLFCIII) threads the bilayer. Residues 784 to 862 (TRGGKVKDKN…QKGGRSVSTS (79 aa)) are Cytoplasmic-facing.

The protein localises to the vacuole membrane. This is FAS1 domain-containing protein YLR001C from Saccharomyces cerevisiae (strain ATCC 204508 / S288c) (Baker's yeast).